The sequence spans 136 residues: Small ribosomal subunit protein bS16 (136 aa).

Positions 114–123 (TLKARRRRAK) are enriched in basic residues. Positions 114–136 (TLKARRRRAKKEAEAASASSAEG) are disordered.

The protein belongs to the bacterial ribosomal protein bS16 family.

This is Small ribosomal subunit protein bS16 from Chlorobium chlorochromatii (strain CaD3).